Here is a 187-residue protein sequence, read N- to C-terminus: Small ribosomal subunit protein uS7 (187 aa).

This sequence belongs to the universal ribosomal protein uS7 family. In terms of assembly, part of the 30S ribosomal subunit.

Functionally, one of the primary rRNA binding proteins, it binds directly to 16S rRNA where it nucleates assembly of the head domain of the 30S subunit. Is located at the subunit interface close to the decoding center. This is Small ribosomal subunit protein uS7 from Picrophilus torridus (strain ATCC 700027 / DSM 9790 / JCM 10055 / NBRC 100828 / KAW 2/3).